Reading from the N-terminus, the 64-residue chain is Outer envelope membrane protein 7 (64 aa).

Topologically, residues 1 to 11 are chloroplast intermembrane; the sequence is MGKTSGAKQAT. The chain crosses the membrane as a helical span at residues 12-32; it reads VVVAAMALGWLAIEIAFKPFL. Residues 29–35 carry the AKR2A-binding sequence (ABS) required for chloroplast outer envelope membrane targeting motif; sequence KPFLDKF. Topologically, residues 33-64 are cytoplasmic; the sequence is DKFRSSIDKSDPTKDPDDFDTAATATTSKEGL. A compositionally biased stretch (basic and acidic residues) spans 39–48; it reads IDKSDPTKDP. Residues 39–64 are disordered; it reads IDKSDPTKDPDDFDTAATATTSKEGL. Residues 53–64 are compositionally biased toward low complexity; the sequence is TAATATTSKEGL.

As to quaternary structure, interacts with AKR2A. Confined to green tissues.

The protein localises to the plastid. The protein resides in the chloroplast outer membrane. This Arabidopsis thaliana (Mouse-ear cress) protein is Outer envelope membrane protein 7.